The primary structure comprises 555 residues: Hydroxylamine reductase (555 aa).

Residues cysteine 5, cysteine 8, cysteine 17, and cysteine 23 each coordinate [4Fe-4S] cluster. Hybrid [4Fe-2O-2S] cluster contacts are provided by histidine 248, glutamate 272, cysteine 316, cysteine 408, cysteine 436, cysteine 461, glutamate 496, and lysine 498. The residue at position 408 (cysteine 408) is a Cysteine persulfide.

Belongs to the HCP family. [4Fe-4S] cluster is required as a cofactor. It depends on hybrid [4Fe-2O-2S] cluster as a cofactor.

Its subcellular location is the cytoplasm. It carries out the reaction A + NH4(+) + H2O = hydroxylamine + AH2 + H(+). Catalyzes the reduction of hydroxylamine to form NH(3) and H(2)O. This is Hydroxylamine reductase from Halothermothrix orenii (strain H 168 / OCM 544 / DSM 9562).